We begin with the raw amino-acid sequence, 220 residues long: Ribosomal RNA large subunit methyltransferase E (220 aa).

S-adenosyl-L-methionine contacts are provided by Gly60, Trp62, Asp92, Asp108, and Asp133. The active-site Proton acceptor is Lys173.

This sequence belongs to the class I-like SAM-binding methyltransferase superfamily. RNA methyltransferase RlmE family.

The protein resides in the cytoplasm. The catalysed reaction is uridine(2552) in 23S rRNA + S-adenosyl-L-methionine = 2'-O-methyluridine(2552) in 23S rRNA + S-adenosyl-L-homocysteine + H(+). Its function is as follows. Specifically methylates the uridine in position 2552 of 23S rRNA at the 2'-O position of the ribose in the fully assembled 50S ribosomal subunit. This Burkholderia multivorans (strain ATCC 17616 / 249) protein is Ribosomal RNA large subunit methyltransferase E.